Consider the following 109-residue polypeptide: uncharacterized protein (109 aa).

The protein resides in the mitochondrion. This is an uncharacterized protein from Arabidopsis thaliana (Mouse-ear cress).